Reading from the N-terminus, the 357-residue chain is 3-dehydroquinate synthase (357 aa).

NAD(+) contacts are provided by residues 104–108 (GVVGD), 128–129 (TT), Lys141, and 168–171 (FLET). 3 residues coordinate Zn(2+): Glu183, His243, and His260.

The protein belongs to the sugar phosphate cyclases superfamily. Dehydroquinate synthase family. The cofactor is Co(2+). Requires Zn(2+) as cofactor. NAD(+) serves as cofactor.

The protein localises to the cytoplasm. The catalysed reaction is 7-phospho-2-dehydro-3-deoxy-D-arabino-heptonate = 3-dehydroquinate + phosphate. It participates in metabolic intermediate biosynthesis; chorismate biosynthesis; chorismate from D-erythrose 4-phosphate and phosphoenolpyruvate: step 2/7. Functionally, catalyzes the conversion of 3-deoxy-D-arabino-heptulosonate 7-phosphate (DAHP) to dehydroquinate (DHQ). This chain is 3-dehydroquinate synthase, found in Streptococcus pyogenes serotype M49 (strain NZ131).